Consider the following 458-residue polypeptide: Vacuolar basic amino acid transporter 3 (458 aa).

The Cytoplasmic segment spans residues 1-9; sequence MNMLIVGRV. A helical membrane pass occupies residues 10-30; that stretch reads VASVGGSGLQTLCFVIGCTMV. Topologically, residues 31–36 are vacuolar; the sequence is GERSRP. Residues 37-57 traverse the membrane as a helical segment; the sequence is LVISILSCAFAVAAIVGPIIG. Topologically, residues 58-67 are cytoplasmic; that stretch reads GAFTTHVTWR. A helical membrane pass occupies residues 68-88; sequence WCFYINLPIGGLAIIMFLLTY. Residues 89–132 are Vacuolar-facing; sequence KAENKGILQQIKDAIGTISSFTFSKFRHQVNFKRLMNGIIFKFD. A helical transmembrane segment spans residues 133-153; it reads FFGFALCSAGLVLFLLGLTFG. Topologically, residues 154-163 are cytoplasmic; the sequence is GNKYSWNSGQ. A helical membrane pass occupies residues 164–184; the sequence is VIAYLVLGVLLFIFSLVYDFF. The Vacuolar portion of the chain corresponds to 185–205; that stretch reads LFDKFNPEPDNISYRPLLLRR. The N-linked (GlcNAc...) asparagine glycan is linked to N195. A helical membrane pass occupies residues 206–226; that stretch reads LVAKPAIIIINMVTFLLCTGY. At 227-248 the chain is on the cytoplasmic side; that stretch reads NGQMIYSVQFFQLIFASSAWKA. The chain crosses the membrane as a helical span at residues 249–269; sequence GLHLIPIVITNVIAAIASGVI. Residues 270 to 277 lie on the Vacuolar side of the membrane; the sequence is TKKLGLVK. The chain crosses the membrane as a helical span at residues 278–298; that stretch reads PLLIFGGVLGVIGAGLMTLMT. The Cytoplasmic segment spans residues 299 to 306; sequence NTSTKSTQ. A helical membrane pass occupies residues 307-327; that stretch reads IGVLLLPGFSLGFALQASLMS. Residues 328–415 are Vacuolar-facing; it reads AQLQITKDRP…STIGNILSDS (88 aa). The chain crosses the membrane as a helical span at residues 416–436; sequence IKNVFWMDLGFYALGFLFCSF. The Cytoplasmic segment spans residues 437–458; the sequence is SSNKKLIIPKKDETPEDNLEDK.

This sequence belongs to the major facilitator superfamily.

Its subcellular location is the vacuole membrane. Transporter required for vacuolar uptake of histidine and lysine. This is Vacuolar basic amino acid transporter 3 (VBA3) from Saccharomyces cerevisiae (strain ATCC 204508 / S288c) (Baker's yeast).